A 137-amino-acid polypeptide reads, in one-letter code: MKKLAIAGALLLLAGCAEVENYNNVVKTPAPDWLAGYWQTKGPQRALVSPEAIGSLIVTKEGDTLDCRQWQRVIAVPGKLTLMSDDLTNVTVKRELYEVERDGNTIEYDGMTMERVDRPTAECAAALDKAPLPTPLP.

A signal peptide spans 1 to 15 (MKKLAIAGALLLLAG). Residue Cys-16 is the site of N-palmitoyl cysteine attachment. Residue Cys-16 is the site of S-diacylglycerol cysteine attachment.

The protein localises to the cell membrane. This is an uncharacterized protein from Escherichia coli (strain K12).